Reading from the N-terminus, the 337-residue chain is Holliday junction branch migration complex subunit RuvB (337 aa).

The segment at 4–184 (ADRLIAPAAI…FGIVQRLEFY (181 aa)) is large ATPase domain (RuvB-L). Residues Ile-23, Arg-24, Gly-65, Lys-68, Thr-69, Thr-70, 131 to 133 (EDY), Arg-174, Tyr-184, and Arg-221 each bind ATP. Mg(2+) is bound at residue Thr-69. The small ATPAse domain (RuvB-S) stretch occupies residues 185 to 255 (KVEDLAHIVG…IAAQALDMLD (71 aa)). The segment at 258-337 (NAGFDYMDRK…FGLTTPERQG (80 aa)) is head domain (RuvB-H). Positions 313 and 318 each coordinate DNA.

Belongs to the RuvB family. In terms of assembly, homohexamer. Forms an RuvA(8)-RuvB(12)-Holliday junction (HJ) complex. HJ DNA is sandwiched between 2 RuvA tetramers; dsDNA enters through RuvA and exits via RuvB. An RuvB hexamer assembles on each DNA strand where it exits the tetramer. Each RuvB hexamer is contacted by two RuvA subunits (via domain III) on 2 adjacent RuvB subunits; this complex drives branch migration. In the full resolvosome a probable DNA-RuvA(4)-RuvB(12)-RuvC(2) complex forms which resolves the HJ.

The protein resides in the cytoplasm. The enzyme catalyses ATP + H2O = ADP + phosphate + H(+). Its function is as follows. The RuvA-RuvB-RuvC complex processes Holliday junction (HJ) DNA during genetic recombination and DNA repair, while the RuvA-RuvB complex plays an important role in the rescue of blocked DNA replication forks via replication fork reversal (RFR). RuvA specifically binds to HJ cruciform DNA, conferring on it an open structure. The RuvB hexamer acts as an ATP-dependent pump, pulling dsDNA into and through the RuvAB complex. RuvB forms 2 homohexamers on either side of HJ DNA bound by 1 or 2 RuvA tetramers; 4 subunits per hexamer contact DNA at a time. Coordinated motions by a converter formed by DNA-disengaged RuvB subunits stimulates ATP hydrolysis and nucleotide exchange. Immobilization of the converter enables RuvB to convert the ATP-contained energy into a lever motion, pulling 2 nucleotides of DNA out of the RuvA tetramer per ATP hydrolyzed, thus driving DNA branch migration. The RuvB motors rotate together with the DNA substrate, which together with the progressing nucleotide cycle form the mechanistic basis for DNA recombination by continuous HJ branch migration. Branch migration allows RuvC to scan DNA until it finds its consensus sequence, where it cleaves and resolves cruciform DNA. This Tolumonas auensis (strain DSM 9187 / NBRC 110442 / TA 4) protein is Holliday junction branch migration complex subunit RuvB.